A 179-amino-acid chain; its full sequence is Large ribosomal subunit protein uL6 (179 aa).

The protein belongs to the universal ribosomal protein uL6 family. As to quaternary structure, part of the 50S ribosomal subunit.

This protein binds to the 23S rRNA, and is important in its secondary structure. It is located near the subunit interface in the base of the L7/L12 stalk, and near the tRNA binding site of the peptidyltransferase center. This is Large ribosomal subunit protein uL6 from Mycobacterium leprae (strain Br4923).